A 245-amino-acid chain; its full sequence is Probable phosphatase YcdX (245 aa).

Zn(2+) contacts are provided by histidine 7, histidine 9, histidine 15, histidine 40, glutamate 73, histidine 101, histidine 131, aspartate 192, and histidine 194.

Belongs to the PHP family. Homotrimer. Requires Zn(2+) as cofactor.

This chain is Probable phosphatase YcdX, found in Escherichia coli O81 (strain ED1a).